The primary structure comprises 213 residues: Ribonuclease HII (213 aa).

The region spanning 1-213 (MKIIGIDEAG…SWKTAQKFIQ (213 aa)) is the RNase H type-2 domain. A divalent metal cation-binding residues include D7, E8, and D105.

This sequence belongs to the RNase HII family. Mn(2+) serves as cofactor. The cofactor is Mg(2+).

Its subcellular location is the cytoplasm. It catalyses the reaction Endonucleolytic cleavage to 5'-phosphomonoester.. Functionally, endonuclease that specifically degrades the RNA of RNA-DNA hybrids. In Methanococcoides burtonii (strain DSM 6242 / NBRC 107633 / OCM 468 / ACE-M), this protein is Ribonuclease HII.